The primary structure comprises 469 residues: Serine hydroxymethyltransferase, cytosolic (469 aa).

Lys248 carries the post-translational modification N6-(pyridoxal phosphate)lysine.

Belongs to the SHMT family. Homotetramer. The cofactor is pyridoxal 5'-phosphate.

The protein localises to the cytoplasm. It catalyses the reaction (6R)-5,10-methylene-5,6,7,8-tetrahydrofolate + glycine + H2O = (6S)-5,6,7,8-tetrahydrofolate + L-serine. It functions in the pathway one-carbon metabolism; tetrahydrofolate interconversion. Its function is as follows. Interconversion of serine and glycine. The polypeptide is Serine hydroxymethyltransferase, cytosolic (SHM2) (Candida glabrata (strain ATCC 2001 / BCRC 20586 / JCM 3761 / NBRC 0622 / NRRL Y-65 / CBS 138) (Yeast)).